Consider the following 129-residue polypeptide: Small ribosomal subunit protein eS6 (129 aa).

This sequence belongs to the eukaryotic ribosomal protein eS6 family.

The polypeptide is Small ribosomal subunit protein eS6 (Methanocorpusculum labreanum (strain ATCC 43576 / DSM 4855 / Z)).